The sequence spans 89 residues: Co-chaperonin GroES (89 aa).

This sequence belongs to the GroES chaperonin family. In terms of assembly, heptamer of 7 subunits arranged in a ring. Interacts with the chaperonin GroEL.

It localises to the cytoplasm. Together with the chaperonin GroEL, plays an essential role in assisting protein folding. The GroEL-GroES system forms a nano-cage that allows encapsulation of the non-native substrate proteins and provides a physical environment optimized to promote and accelerate protein folding. GroES binds to the apical surface of the GroEL ring, thereby capping the opening of the GroEL channel. This is Co-chaperonin GroES from Fervidobacterium nodosum (strain ATCC 35602 / DSM 5306 / Rt17-B1).